A 701-amino-acid polypeptide reads, in one-letter code: MSADKLYIDKELSWLSFNERVLQEAADKTVPLIERIRFLGIFSNNLDEFYKVRFADVKRQILINRERGGNDISKHLLSRMQSKALKLNQDFDNLYNELILEMARRRIFLVNETQLDEIQLKWVKKYFHKEVLPHVTPIMLRDDIDVMQFLKDEYAYIAVEMRSGDEFKYALIEIPTDQLPRFVMLPEQKGKRRKTIILLDNIIRLCLDEIFRGFYDYDTLNGYAMKMTRDAEYDLRHEVEYSLLEQMSEGLSQRLTALPVRFVYEREMPEAMLKFLCYKLKISHYDSLIPGGRYHNFKDFISFPNVGRDYLENKPLPPMTCADFEGYANAFDAIRAQDILLHYPYHSFEHMTELVRQASFDPKVVSIKINIYRVAKDSKLMNSLVDAVHNGKRVVVVVELQARFDEEANIEWSRILTDAGVHVIFGVPGMKIHAKLLLITRKEGDEFVRYAHIGTGNFHERTARIYTDFALLTANQELAAEVRAVFGYIENPFRPVKFNHLIVSPRNSRTQIYRLLDSEIANAKAGKKAAITLKVNNLVDKGLINKLYGASAAGVKIRMIIRGMCSLVPGVEGVSDNIEIISIIDRFLEHPRVLVVHNDGNPQVFISSADWMERNIDHRIEVMAPIRDERLKQRIIDILNIQFIDTVKARRIDKEMSNQYVERGNRRKVRSQIAIYDYLKNVEKQTRKAKGQQETNDNSSQ.

Asn45 contributes to the ATP binding site. Residues Arg373 and Arg403 each coordinate Mg(2+). Residues 428-462 (PGMKIHAKLLLITRKEGDEFVRYAHIGTGNFHERT) enclose the PLD phosphodiesterase 1 domain. The active-site Phosphohistidine intermediate is His433. The ATP site is built by Tyr466, Arg562, and His590. The PLD phosphodiesterase 2 domain occupies 585 to 615 (DRFLEHPRVLVVHNDGNPQVFISSADWMERN).

This sequence belongs to the polyphosphate kinase 1 (PPK1) family. Requires Mg(2+) as cofactor. Post-translationally, an intermediate of this reaction is the autophosphorylated ppk in which a phosphate is covalently linked to a histidine residue through a N-P bond.

The catalysed reaction is [phosphate](n) + ATP = [phosphate](n+1) + ADP. In terms of biological role, catalyzes the reversible transfer of the terminal phosphate of ATP to form a long-chain polyphosphate (polyP). The polypeptide is Polyphosphate kinase (Vibrio cholerae serotype O1 (strain ATCC 39315 / El Tor Inaba N16961)).